The following is a 307-amino-acid chain: N-acetylmuramic acid 6-phosphate etherase (307 aa).

The 164-residue stretch at 60–223 (AAQAIARGGR…STGAMVRIGK (164 aa)) folds into the SIS domain. Catalysis depends on Glu-88, which acts as the Proton donor. Residue Glu-119 is part of the active site.

This sequence belongs to the GCKR-like family. MurNAc-6-P etherase subfamily. As to quaternary structure, homodimer.

The catalysed reaction is N-acetyl-D-muramate 6-phosphate + H2O = N-acetyl-D-glucosamine 6-phosphate + (R)-lactate. It participates in amino-sugar metabolism; N-acetylmuramate degradation. Functionally, specifically catalyzes the cleavage of the D-lactyl ether substituent of MurNAc 6-phosphate, producing GlcNAc 6-phosphate and D-lactate. The protein is N-acetylmuramic acid 6-phosphate etherase of Synechococcus elongatus (strain ATCC 33912 / PCC 7942 / FACHB-805) (Anacystis nidulans R2).